We begin with the raw amino-acid sequence, 74 residues long: ATP synthase subunit c (74 aa).

The next 2 helical transmembrane spans lie at Ile13–Ile33 and Ile51–Ile71.

It belongs to the ATPase C chain family. In terms of assembly, F-type ATPases have 2 components, F(1) - the catalytic core - and F(0) - the membrane proton channel. F(1) has five subunits: alpha(3), beta(3), gamma(1), delta(1), epsilon(1). F(0) has three main subunits: a(1), b(2) and c(10-14). The alpha and beta chains form an alternating ring which encloses part of the gamma chain. F(1) is attached to F(0) by a central stalk formed by the gamma and epsilon chains, while a peripheral stalk is formed by the delta and b chains.

The protein localises to the cell inner membrane. Its function is as follows. F(1)F(0) ATP synthase produces ATP from ADP in the presence of a proton or sodium gradient. F-type ATPases consist of two structural domains, F(1) containing the extramembraneous catalytic core and F(0) containing the membrane proton channel, linked together by a central stalk and a peripheral stalk. During catalysis, ATP synthesis in the catalytic domain of F(1) is coupled via a rotary mechanism of the central stalk subunits to proton translocation. Key component of the F(0) channel; it plays a direct role in translocation across the membrane. A homomeric c-ring of between 10-14 subunits forms the central stalk rotor element with the F(1) delta and epsilon subunits. This is ATP synthase subunit c from Granulibacter bethesdensis (strain ATCC BAA-1260 / CGDNIH1).